Reading from the N-terminus, the 304-residue chain is 4-diphosphocytidyl-2-C-methyl-D-erythritol kinase (304 aa).

Residue K20 is part of the active site. ATP is bound at residue 106-116; it reads PVASGIGGGSG. Residue D148 is part of the active site.

Belongs to the GHMP kinase family. IspE subfamily.

The enzyme catalyses 4-CDP-2-C-methyl-D-erythritol + ATP = 4-CDP-2-C-methyl-D-erythritol 2-phosphate + ADP + H(+). The protein operates within isoprenoid biosynthesis; isopentenyl diphosphate biosynthesis via DXP pathway; isopentenyl diphosphate from 1-deoxy-D-xylulose 5-phosphate: step 3/6. In terms of biological role, catalyzes the phosphorylation of the position 2 hydroxy group of 4-diphosphocytidyl-2C-methyl-D-erythritol. The sequence is that of 4-diphosphocytidyl-2-C-methyl-D-erythritol kinase from Bartonella bacilliformis (strain ATCC 35685 / KC583 / Herrer 020/F12,63).